The following is a 767-amino-acid chain: 5-methyltetrahydropteroyltriglutamate--homocysteine methyltransferase (767 aa).

5-methyltetrahydropteroyltri-L-glutamate contacts are provided by residues 16 to 19 and lysine 122; that span reads RELK. L-homocysteine contacts are provided by residues 443–445 and glutamate 496; that span reads IGS. L-methionine-binding positions include 443-445 and glutamate 496; that span reads IGS. Residues 527–528 and tryptophan 573 each bind 5-methyltetrahydropteroyltri-L-glutamate; that span reads RC. Aspartate 611 is a binding site for L-homocysteine. L-methionine is bound at residue aspartate 611. Residue glutamate 617 participates in 5-methyltetrahydropteroyltri-L-glutamate binding. Positions 653, 655, and 677 each coordinate Zn(2+). Residue histidine 706 is the Proton donor of the active site. Cysteine 738 contacts Zn(2+).

Belongs to the vitamin-B12 independent methionine synthase family. Zn(2+) serves as cofactor.

The catalysed reaction is 5-methyltetrahydropteroyltri-L-glutamate + L-homocysteine = tetrahydropteroyltri-L-glutamate + L-methionine. It functions in the pathway amino-acid biosynthesis; L-methionine biosynthesis via de novo pathway; L-methionine from L-homocysteine (MetE route): step 1/1. Catalyzes the transfer of a methyl group from 5-methyltetrahydrofolate to homocysteine resulting in methionine formation. This Ectopseudomonas mendocina (strain ymp) (Pseudomonas mendocina) protein is 5-methyltetrahydropteroyltriglutamate--homocysteine methyltransferase.